A 238-amino-acid polypeptide reads, in one-letter code: Ribonuclease PH (238 aa).

Phosphate-binding positions include Arg-86 and Gly-124–Arg-126.

Belongs to the RNase PH family. In terms of assembly, homohexameric ring arranged as a trimer of dimers.

The catalysed reaction is tRNA(n+1) + phosphate = tRNA(n) + a ribonucleoside 5'-diphosphate. Phosphorolytic 3'-5' exoribonuclease that plays an important role in tRNA 3'-end maturation. Removes nucleotide residues following the 3'-CCA terminus of tRNAs; can also add nucleotides to the ends of RNA molecules by using nucleoside diphosphates as substrates, but this may not be physiologically important. Probably plays a role in initiation of 16S rRNA degradation (leading to ribosome degradation) during starvation. In Proteus mirabilis (strain HI4320), this protein is Ribonuclease PH.